The primary structure comprises 207 residues: MPLPDFRFIRLLPLAALVLTACSITTPKGPGKSPDSPQWRQHQQDVRNLNQYQTRGAFAYISDQQKVYARFFWQQTGQDRYRLLLTNPLGSTELELNAQPGNVQLVDNKGQRYTSDDAEEMIGKLTGMPIPLNSLRQWILGLPGDATDYKLDDQYRLSEITYSQNGKNWKVVYGGYDTKTQPAMPANMELTDGGQRIKLKMDNWIVK.

The signal sequence occupies residues 1 to 21 (MPLPDFRFIRLLPLAALVLTA). A lipid anchor (N-palmitoyl cysteine) is attached at cysteine 22. Residue cysteine 22 is the site of S-diacylglycerol cysteine attachment.

It belongs to the LolB family. In terms of assembly, monomer.

It localises to the cell outer membrane. In terms of biological role, plays a critical role in the incorporation of lipoproteins in the outer membrane after they are released by the LolA protein. This is Outer-membrane lipoprotein LolB from Escherichia coli O6:H1 (strain CFT073 / ATCC 700928 / UPEC).